We begin with the raw amino-acid sequence, 107 residues long: 2Fe-2S ferredoxin CtmE (107 aa).

Residues 3-106 (VKVTYVDSAN…GLVIHTLEPE (104 aa)) form the 2Fe-2S ferredoxin-type domain. [2Fe-2S] cluster is bound by residues Cys41, Cys47, Cys50, and Cys87.

This sequence belongs to the adrenodoxin/putidaredoxin family. Requires [2Fe-2S] cluster as cofactor.

It functions in the pathway terpene metabolism; monoterpene degradation. Involved in the degradation of the cyclic monoterpene limonene. Probably part of an electron transfer system involved in the oxidation of limonene to perillyl alcohol. The protein is 2Fe-2S ferredoxin CtmE of Castellaniella defragrans (strain DSM 12143 / CCUG 39792 / 65Phen) (Alcaligenes defragrans).